The sequence spans 467 residues: Nuclear distribution protein nudF 1 (467 aa).

A LisH domain is found at 9–41; sequence QAEELHKSIIAYLASVNLSESATTLRAELGDAV. A coiled-coil region spans residues 60–87; it reads TSVVRLQKKIMDLESRCAALQSELDSAT. 8 WD repeats span residues 113-154, 156-196, 200-247, 250-289, 292-352, 354-393, 398-428, and 429-466; these read SHRS…RTVK, HTKA…KNIR, GHDH…CVKT, GHVDWVRAVAPSIDGRFLFAAGDDRIPRLWDLSAAETRST, GHEH…IKTL, GHDNWVRALAFHPGGKYLLSVSDDKTIRCWDLTQECKCVR, THEHFVTCLRWAPPLIKDSGANGDAGANGTP, and AATTTSNGARQDPNAANKISIRCVIATGSVDQKVRVFA. Residues 417–437 are compositionally biased toward low complexity; the sequence is GANGDAGANGTPAATTTSNGA. Positions 417 to 441 are disordered; it reads GANGDAGANGTPAATTTSNGARQDP.

The protein belongs to the WD repeat LIS1/nudF family. Self-associates. Interacts with nudE and dynein.

The protein resides in the cytoplasm. The protein localises to the cytoskeleton. It localises to the spindle pole. In terms of biological role, positively regulates the activity of the minus-end directed microtubule motor protein dynein. May enhance dynein-mediated microtubule sliding by targeting dynein to the microtubule plus end. Required for nuclear migration during vegetative growth as well as development. Required for retrograde early endosome (EE) transport from the hyphal tip. Required for localization of dynein to the mitotic spindle poles. Recruits additional proteins to the dynein complex at SPBs. The chain is Nuclear distribution protein nudF 1 from Aspergillus clavatus (strain ATCC 1007 / CBS 513.65 / DSM 816 / NCTC 3887 / NRRL 1 / QM 1276 / 107).